A 138-amino-acid chain; its full sequence is Small ribosomal subunit protein uS9 (138 aa).

Basic and acidic residues predominate over residues 100-118 (PENRPPLKTEGYLTRDPRA). Residues 100-138 (PENRPPLKTEGYLTRDPRAKERKKYGLHKARKAPQYSKR) form a disordered region. Over residues 119 to 138 (KERKKYGLHKARKAPQYSKR) the composition is skewed to basic residues.

This sequence belongs to the universal ribosomal protein uS9 family.

The protein is Small ribosomal subunit protein uS9 of Trichormus variabilis (strain ATCC 29413 / PCC 7937) (Anabaena variabilis).